The primary structure comprises 257 residues: MIEFRNVSKVYPNGTKGLNNINLKIQKGEFVIMVGLSGAGKSTLLKSVNRLHEITEGEIMIECESITAAKGKDLRRMRRDIGMIFQSFNLVKRSTVLKNVLAGRVGYHSTLRTTLGLFPKEDVELAFQALKRVNILEKAYARADELSGGQQQRVSIARALAQEAKIILADEPVASLDPLTTKQVLDDLKKINEDFGITTIVNLHSIALARQYATRIIGLHAGEIVFDGLVEAATDEKFAEIYGDVAQKSELLEVAAK.

An ABC transporter domain is found at isoleucine 2 to alanine 246. Glycine 35–serine 42 is a binding site for ATP.

This sequence belongs to the ABC transporter superfamily. Phosphonates importer (TC 3.A.1.9.1) family. The complex is composed of two ATP-binding proteins (PhnC), two transmembrane proteins (PhnE) and a solute-binding protein (PhnD).

Its subcellular location is the cell membrane. The catalysed reaction is phosphonate(out) + ATP + H2O = phosphonate(in) + ADP + phosphate + H(+). Its function is as follows. Part of the ABC transporter complex PhnCDE involved in phosphonates import. Responsible for energy coupling to the transport system. This Bacillus cereus (strain ATCC 14579 / DSM 31 / CCUG 7414 / JCM 2152 / NBRC 15305 / NCIMB 9373 / NCTC 2599 / NRRL B-3711) protein is Phosphonates import ATP-binding protein PhnC.